Here is a 134-residue protein sequence, read N- to C-terminus: Small ribosomal subunit protein uS9c (134 aa).

It belongs to the universal ribosomal protein uS9 family.

The protein localises to the plastid. It is found in the chloroplast. This is Small ribosomal subunit protein uS9c (rps9) from Euglena gracilis.